Consider the following 350-residue polypeptide: ATP-dependent (S)-NAD(P)H-hydrate dehydratase (350 aa).

Positions 35–342 (LMQSVKRIIP…PEVGRAYEEL (308 aa)) constitute a YjeF C-terminal domain. Residues Gly139 and 192–198 (NVAEFGR) each bind (6S)-NADPHX. Residues 230 to 234 (KGPVD) and 249 to 258 (GGLKRCGGQG) each bind ATP. Asp259 provides a ligand contact to (6S)-NADPHX.

It belongs to the NnrD/CARKD family. Mg(2+) is required as a cofactor.

It localises to the cytoplasm. It carries out the reaction (6S)-NADHX + ATP = ADP + phosphate + NADH + H(+). It catalyses the reaction (6S)-NADPHX + ATP = ADP + phosphate + NADPH + H(+). Functionally, catalyzes the dehydration of the S-form of NAD(P)HX at the expense of ATP, which is converted to ADP. Together with NAD(P)HX epimerase, which catalyzes the epimerization of the S- and R-forms, the enzyme allows the repair of both epimers of NAD(P)HX, a damaged form of NAD(P)H that is a result of enzymatic or heat-dependent hydration. The protein is ATP-dependent (S)-NAD(P)H-hydrate dehydratase of Mycosarcoma maydis (Corn smut fungus).